The sequence spans 558 residues: MAEEAKSKGNAAFSSGDYATAITHFTEAINLSPTNHILYSNRSASYASLHRYEEALSDAKKTIELKPDWSKGYSRLGAAFIGLSKFDEAVDSYKKGLEIDPSNEMLKSGLADASRSRVSSKSNPFVDAFQGKEMWEKLTADPGTRVYLEQDDFVKTMKEIQRNPNNLNLYMKDKRVMKALGVLLNVKFGGSSGEDTEMKEADERKEPEPEMEPMELTEEERQKKERKEKALKEKGEGNVAYKKKDFGRAVEHYTKAMELDDEDISYLTNRAAVYLEMGKYEECIEDCDKAVERGRELRSDFKMIARALTRKGSALVKMARCSKDFEPAIETFQKALTEHRNPDTLKKLNDAEKVKKELEQQEYFDPTIAEEEREKGNGFFKEQKYPEAVKHYSEAIKRNPNDVRAYSNRAACYTKLGALPEGLKDAEKCIELDPSFTKGYSRKGAIQFFMKEYDKAMETYQEGLKHDPKNQEFLDGVRRCVEQINKASRGDLTPEELKERQAKAMQDPEVQNILSDPVMRQVLVDFQENPKAAQEHMKNPMVMNKIQKLVSAGIVQVR.

TPR repeat units lie at residues 2–35 (AEEAKSKGNAAFSSGDYATAITHFTEAINLSPTN), 37–69 (ILYSNRSASYASLHRYEEALSDAKKTIELKPDW), 70–103 (SKGYSRLGAAFIGLSKFDEAVDSYKKGLEIDPSN), and 136–173 (EKLTADPGTRVYLEQDDFVKTMKEIQRNPNNLNLYMKD). The STI1 1 domain occupies 131-170 (GKEMWEKLTADPGTRVYLEQDDFVKTMKEIQRNPNNLNLY). The tract at residues 191-232 (SSGEDTEMKEADERKEPEPEMEPMELTEEERQKKERKEKALK) is disordered. Residues 196–208 (TEMKEADERKEPE) show a composition bias toward basic and acidic residues. Positions 209 to 218 (PEMEPMELTE) are enriched in acidic residues. Residues 219-232 (EERQKKERKEKALK) are compositionally biased toward basic and acidic residues. Positions 227 to 244 (KEKALKEKGEGNVAYKKK) match the Bipartite nuclear localization signal motif. 6 TPR repeats span residues 230–263 (ALKEKGEGNVAYKKKDFGRAVEHYTKAMELDDED), 265–297 (SYLTNRAAVYLEMGKYEECIEDCDKAVERGREL), 305–342 (ARALTRKGSALVKMARCSKDFEPAIETFQKALTEHRNP), 369–402 (AEEEREKGNGFFKEQKYPEAVKHYSEAIKRNPND), 404–436 (RAYSNRAACYTKLGALPEGLKDAEKCIELDPSF), and 437–470 (TKGYSRKGAIQFFMKEYDKAMETYQEGLKHDPKN). Residues 507–546 (DPEVQNILSDPVMRQVLVDFQENPKAAQEHMKNPMVMNKI) enclose the STI1 2 domain.

Co-chaperone that forms a complex with HSP70 and HSP90 and preproteins (e.g. chloroplast preproteins). Phosphorylated. In terms of processing, acetylated.

It localises to the cytoplasm. The protein resides in the nucleus. Its function is as follows. Mediates the association of the molecular chaperones HSP70 and HSP90. Mediates nuclear encoded chloroplast preproteins binding to HSP90 prior to chloroplastic sorting. Involved in acclimation to heat. The sequence is that of Hsp70-Hsp90 organizing protein 3 (HOP3) from Arabidopsis thaliana (Mouse-ear cress).